The primary structure comprises 497 residues: Glycerol kinase (497 aa).

Thr13 serves as a coordination point for ADP. Residues Thr13, Thr14, and Ser15 each coordinate ATP. Sn-glycerol 3-phosphate is bound at residue Thr13. Arg17 is an ADP binding site. The sn-glycerol 3-phosphate site is built by Arg83, Glu84, and Tyr135. The glycerol site is built by Arg83, Glu84, and Tyr135. His231 carries the post-translational modification Phosphohistidine; by HPr. Asp245 is a sn-glycerol 3-phosphate binding site. 2 residues coordinate glycerol: Asp245 and Gln246. Residues Thr267 and Gly310 each coordinate ADP. Residues Thr267, Gly310, Gln314, and Gly411 each coordinate ATP. 2 residues coordinate ADP: Gly411 and Asn415.

Belongs to the FGGY kinase family. In terms of assembly, homotetramer and homodimer (in equilibrium). In terms of processing, the phosphoenolpyruvate-dependent sugar phosphotransferase system (PTS), including enzyme I, and histidine-containing protein (HPr) are required for the phosphorylation, which leads to the activation of the enzyme.

The enzyme catalyses glycerol + ATP = sn-glycerol 3-phosphate + ADP + H(+). Its pathway is polyol metabolism; glycerol degradation via glycerol kinase pathway; sn-glycerol 3-phosphate from glycerol: step 1/1. Its activity is regulated as follows. Activated by phosphorylation and inhibited by fructose 1,6-bisphosphate (FBP). In terms of biological role, key enzyme in the regulation of glycerol uptake and metabolism. Catalyzes the phosphorylation of glycerol to yield sn-glycerol 3-phosphate. This chain is Glycerol kinase, found in Listeria innocua serovar 6a (strain ATCC BAA-680 / CLIP 11262).